A 333-amino-acid polypeptide reads, in one-letter code: Alpha-N-acetylgalactosaminide alpha-2,6-sialyltransferase 6 (333 aa).

Residues 1–12 (MACSRPPSQCDP) are compositionally biased toward polar residues. Positions 1 to 27 (MACSRPPSQCDPTTLPPGPPAGRWPLP) are disordered. At 1–43 (MACSRPPSQCDPTTLPPGPPAGRWPLPFSRRRREMSSNKEQRS) the chain is on the cytoplasmic side. Residues 44-64 (AVFVILFALITILILYSSNSA) form a helical; Signal-anchor for type II membrane protein membrane-spanning segment. Over 65–333 (NEVFHYGSLR…GITFSHPSWT (269 aa)) the chain is Lumenal. Asn98 carries N-linked (GlcNAc...) asparagine glycosylation. Residues Cys108 and Cys256 are joined by a disulfide bond.

Belongs to the glycosyltransferase 29 family. In terms of tissue distribution, widely expressed, the gene expression is most abundant in colon, brain, liver, and heart.

The protein localises to the golgi apparatus membrane. The catalysed reaction is a ganglioside GM1b (d18:1(4E)) + CMP-N-acetyl-beta-neuraminate = a ganglioside GD1alpha (d18:1(4E)) + CMP + H(+). It carries out the reaction a ganglioside GD1a (d18:1(4E)) + CMP-N-acetyl-beta-neuraminate = a ganglioside GT1aalpha (d18:1(4E)) + CMP + H(+). The enzyme catalyses a ganglioside GT1b (d18:1(4E)) + CMP-N-acetyl-beta-neuraminate = a ganglioside GQ1balpha (d18:1(4E)) + CMP + H(+). It catalyses the reaction N-acetyl-alpha-neuraminosyl-(2-&gt;3)-beta-D-galactosyl-(1-&gt;3)-N-acetyl-beta-D-glucosaminyl-(1-&gt;3)-beta-D-galactosyl-(1-&gt;4)-beta-D-glucosyl-(1&lt;-&gt;1')-N-acyl-sphing-4-enine + CMP-N-acetyl-beta-neuraminate = N-acetyl-alpha-neuraminosyl-(2-&gt;3)-beta-D-galactosyl-(1-&gt;3)-[N-acetyl-alpha-neuraminosyl-(2-&gt;6)]-N-acetyl-beta-D-glucosaminyl-(1-&gt;3)-beta-D-galactosyl-(1-&gt;4)-beta-D-glucosyl-(1&lt;-&gt;1')-N-acyl-sphing-4-enine + CMP + H(+). The catalysed reaction is a globoside MSGG + CMP-N-acetyl-beta-neuraminate = a globoside DSGG + CMP + H(+). It carries out the reaction 3-O-[alpha-Neu5Ac-(2-&gt;3)-beta-D-Gal-(1-&gt;3)-alpha-D-GalNAc]-L-Ser-[protein] + CMP-N-acetyl-beta-neuraminate = a 3-O-{alpha-Neu5Ac-(2-&gt;3)-beta-D-Gal-(1-&gt;3)-[alpha-Neu5Ac-(2-&gt;6)]-alpha-D-GalNAc}-L-seryl-[protein] + CMP + H(+). The enzyme catalyses 3-O-[alpha-Neu5Ac-(2-&gt;3)-beta-D-Gal-(1-&gt;3)-alpha-D-GalNAc]-L-Thr-[protein] + CMP-N-acetyl-beta-neuraminate = a 3-O-{alpha-Neu5Ac-(2-&gt;3)-beta-D-Gal-(1-&gt;3)-[alpha-Neu5Ac-(2-&gt;6)]-alpha-D-GalNAc}-L-threonyl-[protein] + CMP + H(+). Its function is as follows. Transfers the sialyl group (N-acetyl-alpha-neuraminyl or NeuAc) from CMP-NeuAc onto glycolipids, forming an alpha-2,6-linkage. Produces branched type disialyl structures by transfer of a sialyl group onto the GalNAc or GlcNAc residue inside backbone core chains having a terminal sialic acid with an alpha-2,3-linkage on Gal. ST6GalNAcVI prefers glycolipids to glycoproteins, predominantly catalyzing the biosynthesis of ganglioside GD1alpha from GM1b. Also has activity toward GD1a and GT1b, and can generate DSGG (disialylgalactosylgloboside) from MSGG (monosialylgalactosylgloboside). Besides GMb1, MSGG and other glycolipids, it shows activity towards sialyl Lc4Cer generating disialyl Lc4Cer, which can lead to the synthesis of disialyl Lewis a (Le(a)), suggested to be a cancer-associated antigen. The protein is Alpha-N-acetylgalactosaminide alpha-2,6-sialyltransferase 6 (St6galnac6) of Mus musculus (Mouse).